A 170-amino-acid chain; its full sequence is Large ribosomal subunit protein bL9 (170 aa).

The disordered stretch occupies residues 149-170 (DGDNEDLDEDNAADENEDYSEE).

This sequence belongs to the bacterial ribosomal protein bL9 family.

Its function is as follows. Binds to the 23S rRNA. The chain is Large ribosomal subunit protein bL9 from Psychrobacter cryohalolentis (strain ATCC BAA-1226 / DSM 17306 / VKM B-2378 / K5).